The chain runs to 865 residues: Alanine--tRNA ligase (865 aa).

Residues His-554, His-558, Cys-656, and His-660 each contribute to the Zn(2+) site.

It belongs to the class-II aminoacyl-tRNA synthetase family. It depends on Zn(2+) as a cofactor.

The protein localises to the cytoplasm. The enzyme catalyses tRNA(Ala) + L-alanine + ATP = L-alanyl-tRNA(Ala) + AMP + diphosphate. Functionally, catalyzes the attachment of alanine to tRNA(Ala) in a two-step reaction: alanine is first activated by ATP to form Ala-AMP and then transferred to the acceptor end of tRNA(Ala). Also edits incorrectly charged Ser-tRNA(Ala) and Gly-tRNA(Ala) via its editing domain. The sequence is that of Alanine--tRNA ligase from Francisella philomiragia subsp. philomiragia (strain ATCC 25017 / CCUG 19701 / FSC 153 / O#319-036).